The following is a 428-amino-acid chain: Sialidase-3 (428 aa).

The FRIP motif signature appears at 24 to 27; that stretch reads YRIP. 2 residues coordinate substrate: Arg25 and Arg45. The Proton acceptor role is filled by Asp50. Residues 129-140 form a BNR 1 repeat; that stretch reads ICSQDAGYSWSD. Residues Tyr179 and Tyr181 each contribute to the substrate site. A BNR 2 repeat occupies 203 to 214; it reads IYSDDLGATWHH. 2 residues coordinate substrate: Glu225 and Arg245. One copy of the BNR 3 repeat lies at 254–265; sequence ALSIDHGECFQK. Residue Ser314 is modified to Phosphoserine. Residue Arg341 coordinates substrate. The Nucleophile role is filled by Tyr371. Glu388 is an active-site residue.

Belongs to the glycosyl hydrolase 33 family. As to quaternary structure, interacts with CAV1; this interaction enhances NEU3 sialidase activity within caveola. Interacts with EGFR; this interaction mediates desialylation of EGFR and enhances downstream signaling. Post-translationally, palmitoylated; may regulate intracellular trafficking and anchorage to plasma membrane and endomembranes. In terms of tissue distribution, expressed in brain.

Its subcellular location is the cell membrane. It is found in the membrane. The protein localises to the caveola. The protein resides in the early endosome membrane. It localises to the recycling endosome membrane. Its subcellular location is the lysosome membrane. It carries out the reaction Hydrolysis of alpha-(2-&gt;3)-, alpha-(2-&gt;6)-, alpha-(2-&gt;8)- glycosidic linkages of terminal sialic acid residues in oligosaccharides, glycoproteins, glycolipids, colominic acid and synthetic substrates.. The enzyme catalyses a ganglioside GD1a + H2O = a ganglioside GM1 + N-acetylneuraminate. The catalysed reaction is a ganglioside GD1a (d18:1(4E)) + H2O = a ganglioside GM1 (d18:1(4E)) + N-acetylneuraminate. It catalyses the reaction a ganglioside GD1b + H2O = a ganglioside GM1 + N-acetylneuraminate. It carries out the reaction a ganglioside GD1b (d18:1(4E)) + H2O = a ganglioside GM1 (d18:1(4E)) + N-acetylneuraminate. The enzyme catalyses a ganglioside GD3 + H2O = a ganglioside GM3 + N-acetylneuraminate. The catalysed reaction is a ganglioside GD3 (d18:1(4E)) + H2O = a ganglioside GM3 (d18:1(4E)) + N-acetylneuraminate. It catalyses the reaction a ganglioside GM3 + H2O = a beta-D-galactosyl-(1-&gt;4)-beta-D-glucosyl-(1&lt;-&gt;1)-ceramide + N-acetylneuraminate. It carries out the reaction a ganglioside GM1 + H2O = a ganglioside GA1 + N-acetylneuraminate. The enzyme catalyses a ganglioside GM1 (d18:1(4E)) + H2O = a ganglioside GA1 (d18:1(4E)) + N-acetylneuraminate. The catalysed reaction is a ganglioside GM2 (d18:1(4E)) + H2O = a ganglioside GA2 (d18:1(4E)) + N-acetylneuraminate. It catalyses the reaction a ganglioside GM3 (d18:1(4E)) + H2O = a beta-D-Gal-(1-&gt;4)-beta-D-Glc-(1&lt;-&gt;1)-Cer(d18:1(4E)) + N-acetylneuraminate. It carries out the reaction a ganglioside GT1b + H2O = a ganglioside GD1b + N-acetylneuraminate. In terms of biological role, exo-alpha-sialidase that catalyzes the hydrolytic cleavage of the terminal sialic acid (N-acetylneuraminic acid, Neu5Ac) of a glycan moiety in the catabolism of glycolipids, glycoproteins and oligosacharides. Displays high catalytic efficiency for gangliosides including alpha-(2-&gt;3)-sialylated GD1a and GM3 and alpha-(2-&gt;8)-sialylated GD3. Plays a role in the regulation of transmembrane signaling through the modulation of ganglioside content of the lipid bilayer and by direct interaction with signaling receptors, such as EGFR. Desialylates EGFR and activates downstream signaling in proliferating cells. Contributes to clathrin-mediated endocytosis by regulating sorting of endocytosed receptors to early and recycling endosomes. This Bos taurus (Bovine) protein is Sialidase-3 (NEU3).